The primary structure comprises 192 residues: Protein FAM210B, mitochondrial (192 aa).

The transit peptide at 1 to 58 (MAGLLALLGPAGRVGARVRPRATWLLGATAPCAPPPLALALLPPRLDARLLRTARGDC) directs the protein to the mitochondrion. The segment at 57–80 (DCRGHQDPSQATGTTGSSVSCTEE) is disordered. Residues 63–77 (DPSQATGTTGSSVSC) show a composition bias toward polar residues. Residues 80-191 (EKKQSKSQQL…VGFFKPPAAK (112 aa)) enclose the DUF1279 domain. The next 2 helical transmembrane spans lie at 99–119 (VGVSLHIGISLISLGIFYMVV) and 150–170 (FVVAYAIHKLFAPVRISITLV).

Belongs to the FAM210 family. As to expression, expressed in late erythroblast differentiation stages. Underexpressed in ovarian cancer epithelia cells compared with normal human ovarian surface epithelia.

Its subcellular location is the mitochondrion. It localises to the mitochondrion outer membrane. In terms of biological role, plays a role in erythroid differentiation. Involved in cell proliferation and tumor cell growth suppression. Involved in the metabolic reprogramming of cancer cells in a PDK4-dependent manner. The polypeptide is Protein FAM210B, mitochondrial (Homo sapiens (Human)).